A 145-amino-acid polypeptide reads, in one-letter code: Protein MMF1, mitochondrial (145 aa).

The N-terminal 17 residues, methionine 1–glycine 17, are a transit peptide targeting the mitochondrion.

This sequence belongs to the RutC family.

Its subcellular location is the mitochondrion matrix. Functionally, plays a role in the maintenance of mitochondrial DNA. The chain is Protein MMF1, mitochondrial (MMF1) from Saccharomyces cerevisiae (strain ATCC 204508 / S288c) (Baker's yeast).